A 343-amino-acid chain; its full sequence is N-acetyl-gamma-glutamyl-phosphate reductase (343 aa).

Residue cysteine 146 is part of the active site.

The protein belongs to the NAGSA dehydrogenase family. Type 1 subfamily.

The protein localises to the cytoplasm. It catalyses the reaction N-acetyl-L-glutamate 5-semialdehyde + phosphate + NADP(+) = N-acetyl-L-glutamyl 5-phosphate + NADPH + H(+). Its pathway is amino-acid biosynthesis; L-arginine biosynthesis; N(2)-acetyl-L-ornithine from L-glutamate: step 3/4. Functionally, catalyzes the NADPH-dependent reduction of N-acetyl-5-glutamyl phosphate to yield N-acetyl-L-glutamate 5-semialdehyde. The sequence is that of N-acetyl-gamma-glutamyl-phosphate reductase from Pseudarthrobacter chlorophenolicus (strain ATCC 700700 / DSM 12829 / CIP 107037 / JCM 12360 / KCTC 9906 / NCIMB 13794 / A6) (Arthrobacter chlorophenolicus).